Consider the following 301-residue polypeptide: RNA polymerase II holoenzyme cyclin-like subunit (301 aa).

Residues glutamine 53–serine 142 enclose the Cyclin N-terminal domain.

Belongs to the cyclin family. Cyclin C subfamily. In terms of assembly, component of the srb8-11 complex, a regulatory module of the Mediator complex.

The protein resides in the nucleus. Functionally, component of the srb8-11 complex. The srb8-11 complex is a regulatory module of the Mediator complex which is itself involved in regulation of basal and activated RNA polymerase II-dependent transcription. The srb8-11 complex may be involved in the transcriptional repression of a subset of genes regulated by Mediator. It may inhibit the association of the Mediator complex with RNA polymerase II to form the holoenzyme complex. The srb8-11 complex phosphorylates the C-terminal domain (CTD) of the largest subunit of RNA polymerase II. The chain is RNA polymerase II holoenzyme cyclin-like subunit (ssn8) from Aspergillus oryzae (strain ATCC 42149 / RIB 40) (Yellow koji mold).